The primary structure comprises 433 residues: MNQNFSKKSSNDLINRIIFTIFVLIICRFGSFIPIAGIDAIALGSIAEKNQSGILGMFNMLSGGSLGRMSIFALAIMPYITASIIIQLMSVAYKPLENLKKEGEAGKRKINQLSRYLTVLLASLQAYGVAVSLESIVTNTGPVVIIPGLFFKITTVITLVVGTMLLMWLGEQITQRGIGNGTSLIIFIGIISGVPSAIISMFELSRKGALSPLVAIAVCAGVVILISIIIFFEKAQRKLLVQYPKRQVGNKIYGGDSTYMPLKLNTSGVIPPIFASSILLFPATLANFSSSNSEIMNMLTYYLGHGKPIYILLYVALIMFFSFFYTAIVFNSEETANNLRKYGAYIPGKRPGKNTSEYFDYILTRLTVVGGIYLSVICIIPELLMNKYVISLSLGGTSFLIVVNVVLDTLTQIQTYLFSSKYESLMKKVKLKN.

10 consecutive transmembrane segments (helical) span residues 17–37 (IIFT…PIAG), 71–91 (IFAL…LMSV), 117–137 (LTVL…ESIV), 141–161 (GPVV…TLVV), 184–204 (LIIF…MFEL), 212–232 (PLVA…IIFF), 268–288 (GVIP…LANF), 309–329 (IYIL…TAIV), 366–386 (LTVV…LLMN), and 388–408 (YVIS…VVLD).

It belongs to the SecY/SEC61-alpha family. In terms of assembly, component of the Sec protein translocase complex. Heterotrimer consisting of SecY, SecE and SecG subunits. The heterotrimers can form oligomers, although 1 heterotrimer is thought to be able to translocate proteins. Interacts with the ribosome. Interacts with SecDF, and other proteins may be involved. Interacts with SecA.

The protein resides in the cell inner membrane. In terms of biological role, the central subunit of the protein translocation channel SecYEG. Consists of two halves formed by TMs 1-5 and 6-10. These two domains form a lateral gate at the front which open onto the bilayer between TMs 2 and 7, and are clamped together by SecE at the back. The channel is closed by both a pore ring composed of hydrophobic SecY resides and a short helix (helix 2A) on the extracellular side of the membrane which forms a plug. The plug probably moves laterally to allow the channel to open. The ring and the pore may move independently. This Rickettsia bellii (strain RML369-C) protein is Protein translocase subunit SecY.